Reading from the N-terminus, the 425-residue chain is L-lysine 2,3-aminomutase (425 aa).

Positions 113-325 constitute a Radical SAM core domain; the sequence is HRYPDRVLLL…GLRGHTSGYA (213 aa). The [4Fe-4S] cluster site is built by C127, C131, and C134. K339 carries the post-translational modification N6-(pyridoxal phosphate)lysine.

Belongs to the radical SAM superfamily. KamA family. Homotetramer. [4Fe-4S] cluster is required as a cofactor. The cofactor is pyridoxal 5'-phosphate.

The enzyme catalyses L-lysine = (3S)-3,6-diaminohexanoate. It functions in the pathway amino-acid degradation; L-lysine degradation via acetate pathway. Functionally, catalyzes the interconversion of L-alpha-lysine and L-beta-lysine. This is L-lysine 2,3-aminomutase from Fusobacterium nucleatum subsp. nucleatum (strain ATCC 25586 / DSM 15643 / BCRC 10681 / CIP 101130 / JCM 8532 / KCTC 2640 / LMG 13131 / VPI 4355).